The primary structure comprises 245 residues: MVPWLGPDDPFPPVERALGANSGAPGLLAASGDLLPSRLIDAYRRGIFPWYSDGQPVLWWSPDPRMILRPAEFKVSPSLRKTLRRVLRDDAWEIRVDHDFAAVMRACAQAPRRGQRGTWITADVVEAYSSLHRVGDAHSIETWFEGRRVGGLYGVSFGKMFFGESMFAEVTDASKMALAALVGHLRRHEIEMIDCQQNTSHLASLGGREIARKAFIAHVRASVEAPPIPWLFDKTVLLEIVAPAA.

The protein belongs to the L/F-transferase family.

Its subcellular location is the cytoplasm. It catalyses the reaction N-terminal L-lysyl-[protein] + L-leucyl-tRNA(Leu) = N-terminal L-leucyl-L-lysyl-[protein] + tRNA(Leu) + H(+). The catalysed reaction is N-terminal L-arginyl-[protein] + L-leucyl-tRNA(Leu) = N-terminal L-leucyl-L-arginyl-[protein] + tRNA(Leu) + H(+). It carries out the reaction L-phenylalanyl-tRNA(Phe) + an N-terminal L-alpha-aminoacyl-[protein] = an N-terminal L-phenylalanyl-L-alpha-aminoacyl-[protein] + tRNA(Phe). Its function is as follows. Functions in the N-end rule pathway of protein degradation where it conjugates Leu, Phe and, less efficiently, Met from aminoacyl-tRNAs to the N-termini of proteins containing an N-terminal arginine or lysine. This Paraburkholderia xenovorans (strain LB400) protein is Leucyl/phenylalanyl-tRNA--protein transferase.